Reading from the N-terminus, the 29-residue chain is Cyclotide cter-K (29 aa).

Residues 1–29 (HEPCGESCVFIPCITTVVGCSCKNKVCYN) constitute a cross-link (cyclopeptide (His-Asn)). 3 cysteine pairs are disulfide-bonded: cysteine 4–cysteine 20, cysteine 8–cysteine 22, and cysteine 13–cysteine 27.

Contains 3 disulfide bonds. In terms of processing, this is a cyclic peptide.

Functionally, probably participates in a plant defense mechanism. The sequence is that of Cyclotide cter-K from Clitoria ternatea (Butterfly pea).